Reading from the N-terminus, the 193-residue chain is MEPFRIHKGTAAVLMNDNIDTDQIIPKQYLKRIERTGFGKFLFDEWRYDNNRQENPNFPLNAPDRKGASILITGDNFGCGSSREHAPWALADYGFRVIIAGGFADIFYMNCMKNGMLPIVMDKEMREKLVKTDAREQIEVDLENEVITTSTHRFHFTIEKMWKEKLLNGLDEISITMQYEQEIKEYERRVAVY.

It belongs to the LeuD family. LeuD type 1 subfamily. As to quaternary structure, heterodimer of LeuC and LeuD.

The catalysed reaction is (2R,3S)-3-isopropylmalate = (2S)-2-isopropylmalate. It functions in the pathway amino-acid biosynthesis; L-leucine biosynthesis; L-leucine from 3-methyl-2-oxobutanoate: step 2/4. Its function is as follows. Catalyzes the isomerization between 2-isopropylmalate and 3-isopropylmalate, via the formation of 2-isopropylmaleate. The sequence is that of 3-isopropylmalate dehydratase small subunit from Bacillus thuringiensis subsp. konkukian (strain 97-27).